The following is a 422-amino-acid chain: Tyrosine--tRNA ligase (422 aa).

Position 37 (Y37) interacts with L-tyrosine. The 'HIGH' region motif lies at 42–51; that stretch reads PTEESLHIGH. Positions 175 and 179 each coordinate L-tyrosine. The short motif at 235–239 is the 'KMSKS' region element; that stretch reads KFGKT. K238 provides a ligand contact to ATP. In terms of domain architecture, S4 RNA-binding spans 357 to 414; that stretch reads KDLQEALVLTSLAQSRTQAKNMIISNSISINTEKIRKNHIFHEKDKLFGKFTLLSRGK.

This sequence belongs to the class-I aminoacyl-tRNA synthetase family. TyrS type 1 subfamily. As to quaternary structure, homodimer.

The protein localises to the cytoplasm. The enzyme catalyses tRNA(Tyr) + L-tyrosine + ATP = L-tyrosyl-tRNA(Tyr) + AMP + diphosphate + H(+). In terms of biological role, catalyzes the attachment of tyrosine to tRNA(Tyr) in a two-step reaction: tyrosine is first activated by ATP to form Tyr-AMP and then transferred to the acceptor end of tRNA(Tyr). In Buchnera aphidicola subsp. Acyrthosiphon pisum (strain Tuc7), this protein is Tyrosine--tRNA ligase.